A 786-amino-acid chain; its full sequence is Pheromone-regulated membrane protein 10 (786 aa).

Over residues 1-28 (MADSGDKDVSKSVRFDKESIESKKRSSV) the composition is skewed to basic and acidic residues. Disordered regions lie at residues 1-65 (MADS…EDGN) and 77-103 (NGGAGLAPGLSKANSNQEKTDLEDNDN). Low complexity predominate over residues 29–42 (DDSASSYSSSSSGQ). Helical transmembrane passes span 469–489 (WVCVFLYGFCSAMVTPYAFGG), 491–511 (WINLAITFFMGSCVGMMQFIL), 521–541 (VFEITASIVVSFCGRAFGSIP), 545–565 (ICFGAITQGSLALILPGYIIL), 584–604 (FYAIIYSLFLGFGITLGAALF), 620–640 (PISPWFRFLFVPAFTIGISLI), 645–665 (WTQLPAMVFISCTGYVVTYWS), 675–695 (FTAALASFVIGILGNLYSRIW), 697–717 (GLAVSAMLPAIFVQVPSGIAS), and 751–771 (FGITMIEVSIGISVGLFASTL).

It belongs to the ThrE exporter (TC 2.A.79) family.

The protein localises to the membrane. The chain is Pheromone-regulated membrane protein 10 from Candida glabrata (strain ATCC 2001 / BCRC 20586 / JCM 3761 / NBRC 0622 / NRRL Y-65 / CBS 138) (Yeast).